Consider the following 406-residue polypeptide: Cysteine desulfurase (406 aa).

Lys226 bears the N6-(pyridoxal phosphate)lysine mark. The active-site Cysteine persulfide intermediate is the Cys364.

Belongs to the class-V pyridoxal-phosphate-dependent aminotransferase family. Csd subfamily. As to quaternary structure, homodimer. Interacts with SufE and the SufBCD complex composed of SufB, SufC and SufD. The interaction with SufE is required to mediate the direct transfer of the sulfur atom from the S-sulfanylcysteine. Pyridoxal 5'-phosphate serves as cofactor.

It is found in the cytoplasm. It carries out the reaction (sulfur carrier)-H + L-cysteine = (sulfur carrier)-SH + L-alanine. The enzyme catalyses L-selenocysteine + AH2 = hydrogenselenide + L-alanine + A + H(+). Its pathway is cofactor biosynthesis; iron-sulfur cluster biosynthesis. Its function is as follows. Cysteine desulfurases mobilize the sulfur from L-cysteine to yield L-alanine, an essential step in sulfur metabolism for biosynthesis of a variety of sulfur-containing biomolecules. Component of the suf operon, which is activated and required under specific conditions such as oxidative stress and iron limitation. Acts as a potent selenocysteine lyase in vitro, that mobilizes selenium from L-selenocysteine. Selenocysteine lyase activity is however unsure in vivo. This is Cysteine desulfurase from Escherichia coli O17:K52:H18 (strain UMN026 / ExPEC).